Consider the following 75-residue polypeptide: Putative antitoxin VapB12 (75 aa).

Its function is as follows. Putative antitoxin component of a possible type II toxin-antitoxin (TA) system. The cognate toxin is VapC12. The sequence is that of Putative antitoxin VapB12 (vapB12) from Mycobacterium tuberculosis (strain CDC 1551 / Oshkosh).